We begin with the raw amino-acid sequence, 292 residues long: NAD kinase (292 aa).

Catalysis depends on Asp73, which acts as the Proton acceptor. Residues 73 to 74 (DG), 147 to 148 (NE), His158, Arg175, Asp177, 188 to 193 (TAYSLS), and Gln247 each bind NAD(+).

It belongs to the NAD kinase family. It depends on a divalent metal cation as a cofactor.

The protein localises to the cytoplasm. The enzyme catalyses NAD(+) + ATP = ADP + NADP(+) + H(+). Involved in the regulation of the intracellular balance of NAD and NADP, and is a key enzyme in the biosynthesis of NADP. Catalyzes specifically the phosphorylation on 2'-hydroxyl of the adenosine moiety of NAD to yield NADP. This is NAD kinase from Klebsiella pneumoniae subsp. pneumoniae (strain ATCC 700721 / MGH 78578).